The chain runs to 305 residues: N-acyl-aromatic-L-amino acid amidohydrolase (carboxylate-forming) (305 aa).

Residues His-15 and Glu-18 each contribute to the Zn(2+) site. Residues Arg-57 and 64–65 each bind substrate; that span reads NR. A Zn(2+)-binding site is contributed by His-108. The substrate site is built by Glu-171 and Tyr-281.

It belongs to the AspA/AstE family. Aspartoacylase subfamily. Homotetramer. The cofactor is Zn(2+).

The protein localises to the apical cell membrane. It localises to the cytoplasm. The catalysed reaction is an N-acyl-aromatic L-alpha-amino acid + H2O = an aromatic L-alpha-amino acid + a carboxylate. It catalyses the reaction an N-acetyl-L-cysteine-S-conjugate + H2O = an S-substituted L-cysteine + acetate. In terms of biological role, plays an important role in deacetylating mercapturic acids in kidney proximal tubules. The sequence is that of N-acyl-aromatic-L-amino acid amidohydrolase (carboxylate-forming) (acy3) from Xenopus laevis (African clawed frog).